We begin with the raw amino-acid sequence, 146 residues long: Hemoglobin subunit beta (146 aa).

Valine 1 is subject to N-acetylvaline. A Globin domain is found at 2-146 (HLTADEKVSL…VANALAHKYH (145 aa)). Serine 44 is subject to Phosphoserine. Lysine 59 bears the N6-acetyllysine mark. Histidine 63 is a binding site for heme b. An N6-acetyllysine modification is found at lysine 82. Residue histidine 92 coordinates heme b. Cysteine 93 carries the S-nitrosocysteine modification. Lysine 144 carries the post-translational modification N6-acetyllysine.

This sequence belongs to the globin family. Heterotetramer of two alpha chains and two beta chains. Red blood cells.

Its function is as follows. Involved in oxygen transport from the lung to the various peripheral tissues. The polypeptide is Hemoglobin subunit beta (Tamias striatus (Eastern chipmunk)).